Here is a 636-residue protein sequence, read N- to C-terminus: Golgin subfamily A member 8F (636 aa).

Disordered regions lie at residues 1 to 72 and 107 to 127; these read MAEE…SATL and NKQV…KQKA. A compositionally biased stretch (polar residues) spans 38–50; the sequence is TNGSIHETATSGG. Coiled coils occupy residues 93 to 148, 211 to 263, and 306 to 412; these read VSQL…LNTD, LEQS…MSQE, and EVEL…QQKQ. Positions 109-127 are enriched in basic and acidic residues; it reads QVEHQLEEEKKANNEKQKA. Disordered stretches follow at residues 344-364, 422-449, 496-537, and 588-612; these read LREQ…QEER, ALPG…SIPQ, PITK…GVAA, and PVQG…QDHQ. Over residues 429-441 the composition is skewed to basic and acidic residues; the sequence is GGGHLDSEGEEAP. The span at 509-522 shows a compositional bias: gly residues; the sequence is PGGGHHQAGPGQGG.

Belongs to the GOLGA8 family.

This chain is Golgin subfamily A member 8F, found in Homo sapiens (Human).